Consider the following 72-residue polypeptide: Translation initiation factor IF-1 (72 aa).

One can recognise an S1-like domain in the interval 1–72; the sequence is MAKEDNIEMQ…SKGRIVFRSR (72 aa).

It belongs to the IF-1 family. In terms of assembly, component of the 30S ribosomal translation pre-initiation complex which assembles on the 30S ribosome in the order IF-2 and IF-3, IF-1 and N-formylmethionyl-tRNA(fMet); mRNA recruitment can occur at any time during PIC assembly.

The protein resides in the cytoplasm. In terms of biological role, one of the essential components for the initiation of protein synthesis. Stabilizes the binding of IF-2 and IF-3 on the 30S subunit to which N-formylmethionyl-tRNA(fMet) subsequently binds. Helps modulate mRNA selection, yielding the 30S pre-initiation complex (PIC). Upon addition of the 50S ribosomal subunit IF-1, IF-2 and IF-3 are released leaving the mature 70S translation initiation complex. This is Translation initiation factor IF-1 from Sodalis glossinidius (strain morsitans).